Here is a 157-residue protein sequence, read N- to C-terminus: Small ribosomal subunit protein bS16 (157 aa).

Positions N114–E157 are disordered.

This sequence belongs to the bacterial ribosomal protein bS16 family.

This Corynebacterium diphtheriae (strain ATCC 700971 / NCTC 13129 / Biotype gravis) protein is Small ribosomal subunit protein bS16.